Here is a 321-residue protein sequence, read N- to C-terminus: Lipoyl synthase (321 aa).

Positions 68, 73, 79, 94, 98, 101, and 308 each coordinate [4Fe-4S] cluster. The 218-residue stretch at 80–297 folds into the Radical SAM core domain; sequence FNHGTATFMI…KEIALELGFT (218 aa).

Belongs to the radical SAM superfamily. Lipoyl synthase family. [4Fe-4S] cluster is required as a cofactor.

It is found in the cytoplasm. It carries out the reaction [[Fe-S] cluster scaffold protein carrying a second [4Fe-4S](2+) cluster] + N(6)-octanoyl-L-lysyl-[protein] + 2 oxidized [2Fe-2S]-[ferredoxin] + 2 S-adenosyl-L-methionine + 4 H(+) = [[Fe-S] cluster scaffold protein] + N(6)-[(R)-dihydrolipoyl]-L-lysyl-[protein] + 4 Fe(3+) + 2 hydrogen sulfide + 2 5'-deoxyadenosine + 2 L-methionine + 2 reduced [2Fe-2S]-[ferredoxin]. The protein operates within protein modification; protein lipoylation via endogenous pathway; protein N(6)-(lipoyl)lysine from octanoyl-[acyl-carrier-protein]: step 2/2. Catalyzes the radical-mediated insertion of two sulfur atoms into the C-6 and C-8 positions of the octanoyl moiety bound to the lipoyl domains of lipoate-dependent enzymes, thereby converting the octanoylated domains into lipoylated derivatives. The chain is Lipoyl synthase from Vibrio vulnificus (strain CMCP6).